The sequence spans 320 residues: uncharacterized protein (320 aa).

Residues 22–86 (KTIGRSSSFD…IRDLNNKTGT (65 aa)) enclose the FHA domain. Positions 242 to 264 (TDTDTTEEKEEEEEKEEGDDEEG) are disordered.

This is an uncharacterized protein from Saccharomyces cerevisiae (strain ATCC 204508 / S288c) (Baker's yeast).